The sequence spans 310 residues: Malate dehydrogenase (310 aa).

NAD(+) is bound by residues 7–12 and Asp32; that span reads GAGNVG. Positions 81 and 87 each coordinate substrate. NAD(+)-binding positions include Asn94 and 117–119; that span reads VSN. Substrate is bound by residues Asn119 and Arg150. His174 (proton acceptor) is an active-site residue.

Belongs to the LDH/MDH superfamily. MDH type 3 family.

The enzyme catalyses (S)-malate + NAD(+) = oxaloacetate + NADH + H(+). Functionally, catalyzes the reversible oxidation of malate to oxaloacetate. The sequence is that of Malate dehydrogenase from Pelodictyon phaeoclathratiforme (strain DSM 5477 / BU-1).